The sequence spans 193 residues: Outer membrane lipoprotein DolP (193 aa).

The first 21 residues, 1–21 (MTLSPLKKLAILLGATIFLQG), serve as a signal peptide directing secretion. A lipid anchor (N-palmitoyl cysteine) is attached at cysteine 22. Cysteine 22 is lipidated: S-diacylglycerol cysteine. 2 consecutive BON domains span residues 48 to 117 (DDET…TVSP) and 126 to 193 (KDSW…KYLD).

The protein belongs to the lipoprotein DolP family.

The protein resides in the cell outer membrane. Its function is as follows. Plays an important role in maintaining outer membrane integrity. In Haemophilus influenzae (strain ATCC 51907 / DSM 11121 / KW20 / Rd), this protein is Outer membrane lipoprotein DolP.